Here is a 122-residue protein sequence, read N- to C-terminus: Large ribosomal subunit protein uL14 (122 aa).

Belongs to the universal ribosomal protein uL14 family. As to quaternary structure, part of the 50S ribosomal subunit. Forms a cluster with proteins L3 and L19. In the 70S ribosome, L14 and L19 interact and together make contacts with the 16S rRNA in bridges B5 and B8.

Functionally, binds to 23S rRNA. Forms part of two intersubunit bridges in the 70S ribosome. The polypeptide is Large ribosomal subunit protein uL14 (Pseudomonas fluorescens (strain ATCC BAA-477 / NRRL B-23932 / Pf-5)).